We begin with the raw amino-acid sequence, 453 residues long: Serine/threonine-protein phosphatase 2A regulatory subunit B'' subunit gamma (453 aa).

EF-hand domains follow at residues Pro273 to Asn308 and Lys341 to Leu376. The Ca(2+) site is built by Asp286, Asp288, Asn290, Met292, and Glu297.

As to quaternary structure, interacts with MCM3AP/GANP. Interacts with PPP5C, and the phosphatase 2A core enzyme composed of the PPP2CA catalytic subunit and the constant regulatory subunit PPP2R1A. Finds in a complex with ABCB1, TFPI2 and PPP2R3C; leading to the dephosphorylation of ABCB1. As to expression, ubiquitously expressed in brain and other tissues.

The protein localises to the nucleus. It is found in the cytoplasm. Its function is as follows. May regulate MCM3AP phosphorylation through phosphatase recruitment. May act as a negative regulator of ABCB1 expression and function through the dephosphorylation of ABCB1 by TFPI2/PPP2R3C complex. May play a role in the activation-induced cell death of B-cells. The chain is Serine/threonine-protein phosphatase 2A regulatory subunit B'' subunit gamma (PPP2R3C) from Homo sapiens (Human).